The following is a 435-amino-acid chain: U-box domain-containing protein 36 (435 aa).

Residues 227 to 345 (EAEASKRKAR…LKGKREEEEA (119 aa)) are a coiled coil. The U-box domain maps to 352 to 426 (EPPQYFICPI…QEWLQLRELL (75 aa)).

The enzyme catalyses S-ubiquitinyl-[E2 ubiquitin-conjugating enzyme]-L-cysteine + [acceptor protein]-L-lysine = [E2 ubiquitin-conjugating enzyme]-L-cysteine + N(6)-ubiquitinyl-[acceptor protein]-L-lysine.. The protein operates within protein modification; protein ubiquitination. Functionally, functions as an E3 ubiquitin ligase. The chain is U-box domain-containing protein 36 (PUB36) from Arabidopsis thaliana (Mouse-ear cress).